We begin with the raw amino-acid sequence, 420 residues long: Ammonia monooxygenase beta subunit (420 aa).

The N-terminal stretch at 1–25 (MGIKNLYKRGVMGLYGVAYAVAALA) is a signal peptide. Residues His-38, His-142, and His-144 each coordinate Cu cation. Transmembrane regions (helical) follow at residues 193–213 (GIFW…VFTA) and 240–260 (ITWV…RYTE).

As to quaternary structure, the soluble ammonia monooxygenase is a nonamer composed of three alpha subunits (AmoA), three beta subunits (AmoB) and three gamma subunits (Cytochrome c1 PetC). The cofactor is Cu(2+).

The protein localises to the cell membrane. It localises to the cytoplasm. It catalyses the reaction AH2 + NH4(+) + O2 = hydroxylamine + A + H2O + H(+). In vitro, inhibited by acetylene. Its function is as follows. Part of the ammonia monooxygenase complex, which catalyzes the oxidation of ammonia to hydroxylamine, the first reaction in the process of ammonia oxidation to nitrite. The protein is Ammonia monooxygenase beta subunit of Nitrosomonas europaea (strain ATCC 19718 / CIP 103999 / KCTC 2705 / NBRC 14298).